Consider the following 227-residue polypeptide: Orotidine 5'-phosphate decarboxylase (227 aa).

Substrate is bound by residues Asp-8, Lys-30, 59–68 (DLKLYDIPYT), Thr-118, Arg-178, Gln-187, Gly-207, and Arg-208. Catalysis depends on Lys-61, which acts as the Proton donor.

This sequence belongs to the OMP decarboxylase family. Type 1 subfamily. As to quaternary structure, homodimer.

The enzyme catalyses orotidine 5'-phosphate + H(+) = UMP + CO2. It functions in the pathway pyrimidine metabolism; UMP biosynthesis via de novo pathway; UMP from orotate: step 2/2. Functionally, catalyzes the decarboxylation of orotidine 5'-monophosphate (OMP) to uridine 5'-monophosphate (UMP). The sequence is that of Orotidine 5'-phosphate decarboxylase from Helicobacter pylori (strain J99 / ATCC 700824) (Campylobacter pylori J99).